Here is a 169-residue protein sequence, read N- to C-terminus: Monothiol glutaredoxin-S15, mitochondrial (169 aa).

The N-terminal 37 residues, 1–37, are a transit peptide targeting the mitochondrion; the sequence is MAASLSSRLIKGIANLKAVRSSRLTSASVYQNGMMRF. The interval 38–61 is disordered; the sequence is SSTVPSDSDTHDDFKPTQKVPPDS. Residues 66–168 enclose the Glutaredoxin domain; it reads KDIVENDVKD…QKLKDVSGNQ (103 aa). Lys-83 provides a ligand contact to glutathione. [2Fe-2S] cluster is bound at residue Cys-91. Glutathione-binding positions include Lys-120, Phe-132, and 145-146; that span reads SD.

The protein belongs to the glutaredoxin family. CGFS subfamily. In terms of assembly, [2Fe-2S]-bridged holo-homodimer. Interacts in vitro with SUFE1, BOLA1, BOLA2 and BOLA4. Interacts in vivo only with BOLA4.

The protein resides in the mitochondrion. Its function is as follows. May only reduce GSH-thiol disulfides, but not protein disulfides. Participates probably to the maturation of iron-sulfur proteins and to the regulation of the redox state of the BOLA proteins. The chain is Monothiol glutaredoxin-S15, mitochondrial from Arabidopsis thaliana (Mouse-ear cress).